The sequence spans 1317 residues: WASH complex subunit 2 (1317 aa).

The sufficient for interaction with WASHC3, WASHC4 and WASHC5; required for interaction with WASHC1 stretch occupies residues 1–219; that stretch reads MNRTSPDSER…VGSDRGSIVD (219 aa). Phosphoserine is present on residues S157, S159, S204, S205, and S209. Positions 201–213 are enriched in low complexity; that stretch reads GELSSEEGSVGSD. The interval 201–630 is disordered; it reads GELSSEEGSV…RKSKGELWDS (430 aa). Acidic residues-rich tracts occupy residues 219-232 and 250-274; these read DSEE…SDED and DEEE…EDIE. S284 carries the post-translational modification Phosphoserine. 2 stretches are compositionally biased toward basic and acidic residues: residues 289–325 and 366–376; these read LAAR…RTPP and DLFRETSRDRP. A Phosphothreonine modification is found at T323. The interval 348–582 is sufficient for interaction with CCDC93; it reads SRGGLFSGQG…QVSSQQPQSQ (235 aa). The interaction with VPS35 stretch occupies residues 349 to 1317; it reads RGGLFSGQGL…DDPLNAFGSQ (969 aa). An LFa 1 motif is present at residues 358–368; the sequence is LFDDEDESDLF. Residues 379-399 are compositionally biased toward low complexity; the sequence is APVSEESSSPKPGKKIPAGAV. Residues S385 and S387 each carry the phosphoserine modification. Short sequence motifs (LFa) lie at residues 433–445 and 464–473; these read LFDD…DNFF and IFDDEEGDLF. Polar residues predominate over residues 500 to 518; it reads TLPSSKNPKLVSETKTQKG. Short sequence motifs (LFa) lie at residues 519–530 and 554–565; these read LFSDEEDSEDLF and LFGDEDEEDNLF. Phosphoserine occurs at positions 521 and 526. Residues 529–548 show a composition bias toward low complexity; it reads LFSSQNSSKSKSASLLSSQL. The span at 569–582 shows a compositional bias: low complexity; sequence PAKKQVSSQQPQSQ. The span at 583–592 shows a compositional bias: basic and acidic residues; sequence EKPKPSEQPK. An LFa 6 motif is present at residues 599-611; that stretch reads LFSSDEEDQWNIT. Residues S601 and S602 each carry the phosphoserine modification. Residues 613 to 627 show a composition bias toward basic and acidic residues; that stretch reads SHTKLATDRKSKGEL. Short sequence motifs (LFa) lie at residues 646 to 657 and 673 to 685; these read LFEEDDDEADLF and LFED…SSLF. Positions 667–817 are disordered; the sequence is TQRTSLLFED…GRPKSTGVFQ (151 aa). S710 bears the Phosphoserine mark. A compositionally biased stretch (basic and acidic residues) spans 717–744; that stretch reads VPSRVKSVDVKVGNGKEADVAKVTEKEG. Residues S763 and S778 each carry the phosphoserine modification. The span at 788–810 shows a compositional bias: basic and acidic residues; the sequence is EDQSNTHVSKNDAEKGLKTDGRP. Short sequence motifs (LFa) lie at residues 815 to 823 and 832 to 838; these read VFQDEELLF and DPDVDLF. Residue S853 is modified to Phosphoserine. Residues 854–864 carry the LFa 11 motif; that stretch reads LFGDDEDYDLF. 2 disordered regions span residues 867 to 926 and 960 to 1079; these read AKTQ…REPS and ELAF…AAPP. Residues 874–906 are compositionally biased toward basic and acidic residues; sequence PEKKGALKKDRPVSLKNEEAPESTEGSKEKSLW. The interaction with phospholipids stretch occupies residues 912–1317; the sequence is QDSSGLTPFK…DDPLNAFGSQ (406 aa). Basic residues predominate over residues 1003–1021; sequence NKSRVKVRGKRRPQTRAAR. The required for interaction with F-actin-capping protein subunit alpha (CAPZA1 or CAPZA2 or CAPZA3) stretch occupies residues 1004-1022; the sequence is KSRVKVRGKRRPQTRAARR. Residues S1029, S1047, S1064, and S1092 each carry the phosphoserine modification. The LFa 12 motif lies at 1107–1114; that stretch reads LFDSGDIF. The tract at residues 1119–1141 is disordered; sequence GSQSMEGTKVKAAETPAHLSGGS. 6 short sequence motifs (LFa) span residues 1147 to 1161, 1177 to 1185, 1210 to 1216, 1238 to 1246, 1266 to 1275, and 1306 to 1314; these read VFPA…DDLF, LLEDEDDLF, IFEDDIF, LFDDNIDIF, VFDDDTDDIF, and IFDDPLNAF. A phosphoserine mark is found at S1152, S1155, and S1156. The tract at residues 1158-1183 is disordered; the sequence is DDLFQTVKPRPAKKRNPFPLLEDEDD. The tract at residues 1277–1317 is disordered; that stretch reads SGLQAKKSKPKSQSAEATSELRSDHKVSNIFDDPLNAFGSQ. A Phosphoserine modification is found at S1316.

It belongs to the FAM21 family. Component of the WASH core complex also described as WASH regulatory complex SHRC composed of WASHC1, WASHC2, WASHC3, WASHC4 and WASHC5; in the complex interacts (via N-terminus) directly with WASHC1. The WASH core complex associates via WASHC2 with the F-actin-capping protein dimer (formed by CAPZA1, CAPZA2 or CAPZA3 and CAPZB) in a transient or substoichiometric manner which was initially described as WASH complex. Interacts with VPS35; mediates the association with the retromer CSC complex. Interacts with FKBP15. Interacts with CCDC93, CCDC22, C16orf62 homolog; indicative for an association of the WASH core complex with the CCC complex. Directly interacts with TBC1D23.

It localises to the early endosome membrane. It is found in the cell membrane. Its function is as follows. Acts as a component of the WASH core complex that functions as a nucleation-promoting factor (NPF) at the surface of endosomes, where it recruits and activates the Arp2/3 complex to induce actin polymerization, playing a key role in the fission of tubules that serve as transport intermediates during endosome sorting. Mediates the recruitment of the WASH core complex to endosome membranes via binding to phospholipids and VPS35 of the retromer CSC. Mediates the recruitment of the F-actin-capping protein dimer to the WASH core complex probably promoting localized F-actin polymerization needed for vesicle scission. Via its C-terminus binds various phospholipids, most strongly phosphatidylinositol 4-phosphate (PtdIns-(4)P), phosphatidylinositol 5-phosphate (PtdIns-(5)P) and phosphatidylinositol 3,5-bisphosphate (PtdIns-(3,5)P2). Involved in the endosome-to-plasma membrane trafficking and recycling of SNX27-retromer-dependent cargo proteins, such as GLUT1. Required for the association of DNAJC13, ENTR1, ANKRD50 with retromer CSC subunit VPS35. Required for the endosomal recruitment of CCC complex subunits COMMD1, CCDC93 and C16orf62 homolog. The sequence is that of WASH complex subunit 2 from Cricetulus griseus (Chinese hamster).